A 196-amino-acid polypeptide reads, in one-letter code: Ribosome maturation factor RimP (196 aa).

Residues 164-196 (LAPQKPNKPGPKKPGHDKKKPSNEPAAGKPRAE) form a disordered region. Residues 173–182 (GPKKPGHDKK) are compositionally biased toward basic residues.

Belongs to the RimP family.

The protein resides in the cytoplasm. In terms of biological role, required for maturation of 30S ribosomal subunits. The protein is Ribosome maturation factor RimP of Xanthomonas campestris pv. campestris (strain B100).